A 251-amino-acid chain; its full sequence is Capsid protein (251 aa).

Residues 1–29 (MPKRDAPWRSMAGTSKVSRNANYSPRSGI) are disordered. The short motif at 3–20 (KRDAPWRSMAGTSKVSRN) is the Bipartite nuclear localization signal element. A compositionally biased stretch (polar residues) spans 12–25 (AGTSKVSRNANYSP). The short motif at 35 to 49 (KAAEWVNRPMYRKPR) is the Nuclear localization signal element. A zinc finger lies at 63–80 (CEGPCKVQSFEQRHDILH). Residues 96–117 (ITHRVGKRFCVKSVYILGKIWM) carry the Nuclear export signal motif. Positions 195–242 (RRFWKVNNHVVYNHQEAGKYENHTENALLLYMACTHASNPVYATLKIR) match the Bipartite nuclear localization signal motif.

It belongs to the geminiviridae capsid protein family. Homomultimer. Binds to single-stranded and double-stranded viral DNA. Interacts (via nuclear localization signals) with host importin alpha-1a.

It localises to the virion. Its subcellular location is the host nucleus. In terms of biological role, encapsidates the viral DNA into characteristic twinned ('geminate') particles. Binds the genomic viral ssDNA and shuttles it into and out of the cell nucleus. The CP of bipartite geminiviruses is not required for cell-to-cell or systemic movement. The chain is Capsid protein from Solanum tuberosum (Potato).